A 314-amino-acid polypeptide reads, in one-letter code: Formylglycine-generating enzyme (314 aa).

A compositionally biased stretch (low complexity) spans 1 to 20 (MAVAAPSPAAAAEPGPAARP). Positions 1 to 31 (MAVAAPSPAAAAEPGPAARPRSTRGQVRLPG) are disordered. The Ca(2+) site is built by Asn-194, Ile-195, Asp-208, and His-210. Positions 272 and 277 each coordinate Cu(2+).

Belongs to the sulfatase-modifying factor family. It depends on Cu(2+) as a cofactor.

It carries out the reaction L-cysteinyl-[sulfatase] + 2 a thiol + O2 = an organic disulfide + 3-oxo-L-alanyl-[sulfatase] + hydrogen sulfide + H2O + H(+). The protein operates within protein modification; sulfatase oxidation. In terms of biological role, oxidase that catalyzes the conversion of cysteine to 3-oxoalanine on target proteins. 3-oxoalanine modification, which is also named formylglycine (fGly), occurs in the maturation of arylsulfatases and some alkaline phosphatases that use the hydrated form of 3-oxoalanine as a catalytic nucleophile. This chain is Formylglycine-generating enzyme, found in Streptomyces coelicolor (strain ATCC BAA-471 / A3(2) / M145).